A 548-amino-acid chain; its full sequence is Acetylcholine receptor subunit alpha-type des-2 (548 aa).

The signal sequence occupies residues 1–19 (MLIIIQSLLLATTASLCIA). The Extracellular segment spans residues 21–239 (TPVPTQIRLV…LTLYLRRKPL (219 aa)). Residues asparagine 52, asparagine 96, and asparagine 224 are each glycosylated (N-linked (GlcNAc...) asparagine). 3 consecutive transmembrane segments (helical) span residues 240-260 (FYLV…IVGF), 274-294 (VSLG…VSDQ), and 301-321 (FIPL…LGTV). The interval 422–460 (LIHLSPTAHQPDESISPSAPPVPSSSPLPPPLTPGPADD) is disordered. The span at 439–455 (SAPPVPSSSPLPPPLTP) shows a compositional bias: pro residues. A helical transmembrane segment spans residues 517 to 537 (FVIFVVAFLIITFGINFIGFI). Residues 538-548 (HWHQAGVEYGG) lie on the Cytoplasmic side of the membrane.

The protein belongs to the ligand-gated ion channel (TC 1.A.9) family. Acetylcholine receptor (TC 1.A.9.1) subfamily. The functional receptor is a heteromer of deg-3 and des-2. Interacts with ric-3; which is required for proper receptor folding.

It is found in the cell membrane. Its function is as follows. Subunit of the non-synaptic neuronal acetylcholine receptor (AChR), which may play a role in chemotaxis towards choline. After binding choline or acetylcholine, the AChR responds by an extensive change in conformation that affects all subunits and leads to opening of an ion-conducting channel across the plasma membrane. In Caenorhabditis elegans, this protein is Acetylcholine receptor subunit alpha-type des-2 (des-2).